Consider the following 479-residue polypeptide: Proline--tRNA ligase (479 aa).

The protein belongs to the class-II aminoacyl-tRNA synthetase family. ProS type 3 subfamily. As to quaternary structure, homodimer.

It is found in the cytoplasm. It carries out the reaction tRNA(Pro) + L-proline + ATP = L-prolyl-tRNA(Pro) + AMP + diphosphate. Functionally, catalyzes the attachment of proline to tRNA(Pro) in a two-step reaction: proline is first activated by ATP to form Pro-AMP and then transferred to the acceptor end of tRNA(Pro). This Mesomycoplasma hyopneumoniae (strain J / ATCC 25934 / NCTC 10110) (Mycoplasma hyopneumoniae) protein is Proline--tRNA ligase.